Consider the following 1438-residue polypeptide: Gag-Pol polyprotein (1438 aa).

Gly2 is lipidated: N-myristoyl glycine; by host. Residues 16–22 (WEKIYLR) carry the Nuclear export signal motif. The Nuclear localization signal signature appears at 26–32 (KKKYMMK). 2 consecutive CCHC-type zinc fingers follow at residues 385–402 (VKCF…NCKA) and 406–423 (KGCW…NCTN). A disordered region spans residues 439 to 481 (GKAREFPSEETRTNSSTNRELRVQGGGTCPEGGSEERGDREQA). The segment covering 440–450 (KAREFPSEETR) has biased composition (basic and acidic residues). One can recognise a Peptidase A2 domain in the interval 507-576 (KEALLDTGAD…TPVNIIGRNI (70 aa)). The active-site For protease activity; shared with dimeric partner is Asp512. Positions 630-820 (EGKISRVGPE…PPFLWMGYEL (191 aa)) constitute a Reverse transcriptase domain. Positions 696, 771, and 772 each coordinate Mg(2+). An RT 'primer grip' region spans residues 813–821 (FLWMGYELH). Residues 984 to 1000 (WEAWWTDYWQATWIPEW) carry the Tryptophan repeat motif motif. Residues 1020–1143 (IPGAETFYVD…IDKLVSSGIR (124 aa)) form the RNase H type-1 domain. Asp1029, Glu1064, Asp1084, and Asp1135 together coordinate Mg(2+). An Integrase-type zinc finger spans residues 1149–1190 (DGIDKAQEEHEKYHNNWRAMASDFNLPPIVAKEIVANCDKCQ). His1158, His1162, Cys1186, and Cys1189 together coordinate Zn(2+). The region spanning 1200–1350 (VDCSPGIWQL…SAGERIIDIL (151 aa)) is the Integrase catalytic domain. Positions 1210 and 1262 each coordinate Mg(2+). Residues 1369–1416 (FRVYYRDSRDPIWKGPAKLLWKGEGAVVLQDQEEIKVVPRRKAKIIRD) constitute a DNA-binding region (integrase-type).

In terms of assembly, homotrimer. Interacts with gp41 (via C-terminus). Homodimer. The active site consists of two apposed aspartic acid residues. As to quaternary structure, heterodimer of p66 RT and p51 RT (RT p66/p51). Heterodimerization of RT is essential for DNA polymerase activity. Despite the sequence identities, p66 RT and p51 RT have distinct folding. In terms of assembly, homotetramer; may further associate as a homohexadecamer. Mg(2+) is required as a cofactor. Specific enzymatic cleavages by the viral protease yield mature proteins. The protease is released by autocatalytic cleavage. The polyprotein is cleaved during and after budding, this process is termed maturation. Proteolytic cleavage of p66 RT removes the RNase H domain to yield the p51 RT subunit. Post-translationally, capsid protein p24 is phosphorylated.

It localises to the virion. Its subcellular location is the host nucleus. The protein localises to the host cytoplasm. It is found in the host cell membrane. The enzyme catalyses Specific for a P1 residue that is hydrophobic, and P1' variable, but often Pro.. It catalyses the reaction Endohydrolysis of RNA in RNA/DNA hybrids. Three different cleavage modes: 1. sequence-specific internal cleavage of RNA. Human immunodeficiency virus type 1 and Moloney murine leukemia virus enzymes prefer to cleave the RNA strand one nucleotide away from the RNA-DNA junction. 2. RNA 5'-end directed cleavage 13-19 nucleotides from the RNA end. 3. DNA 3'-end directed cleavage 15-20 nucleotides away from the primer terminus.. The catalysed reaction is 3'-end directed exonucleolytic cleavage of viral RNA-DNA hybrid.. It carries out the reaction DNA(n) + a 2'-deoxyribonucleoside 5'-triphosphate = DNA(n+1) + diphosphate. The viral protease is inhibited by many synthetic protease inhibitors (PIs), such as amprenavir, atazanavir, indinavir, loprinavir, nelfinavir, ritonavir and saquinavir. RT can be inhibited either by nucleoside RT inhibitors (NRTIs) or by non nucleoside RT inhibitors (NNRTIs). NRTIs act as chain terminators, whereas NNRTIs inhibit DNA polymerization by binding a small hydrophobic pocket near the RT active site and inducing an allosteric change in this region. Classical NRTIs are abacavir, adefovir (PMEA), didanosine (ddI), lamivudine (3TC), stavudine (d4T), tenofovir (PMPA), zalcitabine (ddC), and zidovudine (AZT). Classical NNRTIs are atevirdine (BHAP U-87201E), delavirdine, efavirenz (DMP-266), emivirine (I-EBU), and nevirapine (BI-RG-587). The tritherapies used as a basic effective treatment of AIDS associate two NRTIs and one NNRTI. Use of protease inhibitors in tritherapy regimens permit more ambitious therapeutic strategies. In terms of biological role, gag-Pol polyprotein and Gag polyprotein may regulate their own translation, by the binding genomic RNA in the 5'-UTR. At low concentration, Gag-Pol and Gag would promote translation, whereas at high concentration, the polyproteins encapsidate genomic RNA and then shut off translation. Matrix protein p17 has two main functions: in infected cell, it targets Gag and Gag-pol polyproteins to the plasma membrane via a multipartite membrane-binding signal, that includes its myristointegration complex. The myristoylation signal and the NLS exert conflicting influences its subcellular localization. The key regulation of these motifs might be phosphorylation of a portion of MA molecules on the C-terminal tyrosine at the time of virus maturation, by virion-associated cellular tyrosine kinase. Implicated in the release from host cell mediated by Vpu. Functionally, capsid protein p24 forms the conical core that encapsulates the genomic RNA-nucleocapsid complex in the virion. The core is constituted by capsid protein hexamer subunits. The core is disassembled soon after virion entry. Interaction with host PPIA/CYPA protects the virus from restriction by host TRIM5-alpha and from an unknown antiviral activity in host cells. This capsid restriction by TRIM5 is one of the factors which restricts SIV to the simian species. Its function is as follows. Nucleocapsid protein p7 encapsulates and protects viral dimeric unspliced (genomic) RNA. Binds these RNAs through its zinc fingers. Facilitates rearangement of nucleic acid secondary structure during retrotranscription of genomic RNA. This capability is referred to as nucleic acid chaperone activity. In terms of biological role, the aspartyl protease mediates proteolytic cleavages of Gag and Gag-Pol polyproteins during or shortly after the release of the virion from the plasma membrane. Cleavages take place as an ordered, step-wise cascade to yield mature proteins. This process is called maturation. Displays maximal activity during the budding process just prior to particle release from the cell. Also cleaves Nef and Vif, probably concomitantly with viral structural proteins on maturation of virus particles. Hydrolyzes host EIF4GI and PABP1 in order to shut off the capped cellular mRNA translation. The resulting inhibition of cellular protein synthesis serves to ensure maximal viral gene expression and to evade host immune response. Reverse transcriptase/ribonuclease H (RT) is a multifunctional enzyme that converts the viral dimeric RNA genome into dsDNA in the cytoplasm, shortly after virus entry into the cell. This enzyme displays a DNA polymerase activity that can copy either DNA or RNA templates, and a ribonuclease H (RNase H) activity that cleaves the RNA strand of RNA-DNA heteroduplexes in a partially processive 3' to 5' endonucleasic mode. Conversion of viral genomic RNA into dsDNA requires many steps. A tRNA binds to the primer-binding site (PBS) situated at the 5'-end of the viral RNA. RT uses the 3' end of the tRNA primer to perform a short round of RNA-dependent minus-strand DNA synthesis. The reading proceeds through the U5 region and ends after the repeated (R) region which is present at both ends of viral RNA. The portion of the RNA-DNA heteroduplex is digested by the RNase H, resulting in a ssDNA product attached to the tRNA primer. This ssDNA/tRNA hybridizes with the identical R region situated at the 3' end of viral RNA. This template exchange, known as minus-strand DNA strong stop transfer, can be either intra- or intermolecular. RT uses the 3' end of this newly synthesized short ssDNA to perform the RNA-dependent minus-strand DNA synthesis of the whole template. RNase H digests the RNA template except for two polypurine tracts (PPTs) situated at the 5'-end and near the center of the genome. It is not clear if both polymerase and RNase H activities are simultaneous. RNase H can probably proceed both in a polymerase-dependent (RNA cut into small fragments by the same RT performing DNA synthesis) and a polymerase-independent mode (cleavage of remaining RNA fragments by free RTs). Secondly, RT performs DNA-directed plus-strand DNA synthesis using the PPTs that have not been removed by RNase H as primers. PPTs and tRNA primers are then removed by RNase H. The 3' and 5' ssDNA PBS regions hybridize to form a circular dsDNA intermediate. Strand displacement synthesis by RT to the PBS and PPT ends produces a blunt ended, linear dsDNA copy of the viral genome that includes long terminal repeats (LTRs) at both ends. Functionally, integrase catalyzes viral DNA integration into the host chromosome, by performing a series of DNA cutting and joining reactions. This enzyme activity takes place after virion entry into a cell and reverse transcription of the RNA genome in dsDNA. The first step in the integration process is 3' processing. This step requires a complex comprising the viral genome, matrix protein, Vpr and integrase. This complex is called the pre-integration complex (PIC). The integrase protein removes 2 nucleotides from each 3' end of the viral DNA, leaving recessed CA OH's at the 3' ends. In the second step, the PIC enters cell nucleus. This process is mediated through integrase and Vpr proteins, and allows the virus to infect a non dividing cell. This ability to enter the nucleus is specific of lentiviruses, other retroviruses cannot and rely on cell division to access cell chromosomes. In the third step, termed strand transfer, the integrase protein joins the previously processed 3' ends to the 5' ends of strands of target cellular DNA at the site of integration. The 5'-ends are produced by integrase-catalyzed staggered cuts, 5 bp apart. A Y-shaped, gapped, recombination intermediate results, with the 5'-ends of the viral DNA strands and the 3' ends of target DNA strands remaining unjoined, flanking a gap of 5 bp. The last step is viral DNA integration into host chromosome. This involves host DNA repair synthesis in which the 5 bp gaps between the unjoined strands are filled in and then ligated. Since this process occurs at both cuts flanking the SIV genome, a 5 bp duplication of host DNA is produced at the ends of SIV integration. Alternatively, Integrase may catalyze the excision of viral DNA just after strand transfer, this is termed disintegration. The sequence is that of Gag-Pol polyprotein (gag-pol) from Pan troglodytes (Chimpanzee).